The primary structure comprises 147 residues: Mucoricin (147 aa).

The Ricin B-type lectin domain maps to 4-143 (EEGRLFFIKS…VSANQRWELV (140 aa)).

It belongs to the ribosome-inactivating protein family. Type 1 RIP subfamily.

Its subcellular location is the secreted. It catalyses the reaction Endohydrolysis of the N-glycosidic bond at one specific adenosine on the 28S rRNA.. In terms of biological role, N-glycosylase that inhibits protein synthesis in the host by depurinating ribosomal rRNA, and thus acts as a ribosomal inactivating protein (RIP). Promotes vascular permeability in the host and induces necrosis and apoptosis of host alveolar epithelial cells. The protein is Mucoricin of Rhizopus delemar (strain RA 99-880 / ATCC MYA-4621 / FGSC 9543 / NRRL 43880) (Mucormycosis agent).